A 534-amino-acid polypeptide reads, in one-letter code: Zinc finger protein 671 (534 aa).

The region spanning 49–120 (VVFEDVFVYF…DQVDMTSATE (72 aa)) is the KRAB domain. The C2H2-type 1; degenerate zinc finger occupies 192–214 (YLCGACGKQFWFSTDFDQHQNQP). 9 consecutive C2H2-type zinc fingers follow at residues 285–307 (HRCG…QRIH), 313–335 (YECN…QTVH), 341–363 (YECS…RRVH), 369–391 (YQCG…QEVH), 397–419 (YVCS…QRTH), 425–447 (YECS…WRIH), 451–473 (YECS…QKVH), 479–501 (YECS…WKVH), and 507–529 (YVCS…QRVH).

It belongs to the krueppel C2H2-type zinc-finger protein family.

It localises to the nucleus. Its function is as follows. May be involved in transcriptional regulation. The protein is Zinc finger protein 671 (ZNF671) of Homo sapiens (Human).